Reading from the N-terminus, the 178-residue chain is Ribosome maturation factor RimP (178 aa).

The protein belongs to the RimP family.

The protein resides in the cytoplasm. Required for maturation of 30S ribosomal subunits. This chain is Ribosome maturation factor RimP, found in Maricaulis maris (strain MCS10) (Caulobacter maris).